The primary structure comprises 722 residues: Neprilysin-1 (722 aa).

The first 17 residues, 1–17 (MAVALLVALCVVSSRMA), serve as a signal peptide directing secretion. The Peptidase M13 domain maps to 32–722 (VCNSPVCQKA…MNPTHKCLLW (691 aa)). Disulfide bonds link Cys-33–Cys-38, Cys-56–Cys-707, Cys-64–Cys-667, Cys-120–Cys-378, and Cys-589–Cys-719. N-linked (GlcNAc...) asparagine glycosylation is found at Asn-100, Asn-184, Asn-207, and Asn-424. Zn(2+) is bound at residue His-552. Glu-553 is an active-site residue. His-556 is a Zn(2+) binding site. An N-linked (GlcNAc...) asparagine glycan is attached at Asn-609. Zn(2+) is bound at residue Glu-614. Asp-618 (proton donor) is an active-site residue.

The protein belongs to the peptidase M13 family. Requires Zn(2+) as cofactor. In terms of processing, contains 5 disulfide bonds. Expressed by the venom gland.

Its subcellular location is the secreted. The protein is Neprilysin-1 of Trittame loki (Brush-footed trapdoor spider).